The primary structure comprises 343 residues: tRNA N6-adenosine threonylcarbamoyltransferase (343 aa).

Fe cation-binding residues include His112 and His116. Substrate-binding positions include Leu135 to Gly139, Asp168, Gly181, and Asn273. Asp301 contacts Fe cation.

Belongs to the KAE1 / TsaD family. The cofactor is Fe(2+).

It is found in the cytoplasm. The catalysed reaction is L-threonylcarbamoyladenylate + adenosine(37) in tRNA = N(6)-L-threonylcarbamoyladenosine(37) in tRNA + AMP + H(+). In terms of biological role, required for the formation of a threonylcarbamoyl group on adenosine at position 37 (t(6)A37) in tRNAs that read codons beginning with adenine. Is involved in the transfer of the threonylcarbamoyl moiety of threonylcarbamoyl-AMP (TC-AMP) to the N6 group of A37, together with TsaE and TsaB. TsaD likely plays a direct catalytic role in this reaction. In Azoarcus sp. (strain BH72), this protein is tRNA N6-adenosine threonylcarbamoyltransferase.